The primary structure comprises 360 residues: uncharacterized protein (360 aa).

Residues 4–235 form the ABC transporter domain; that stretch reads LSLQHIQKIY…PANMFVSGFI (232 aa). ATP is bound at residue 37-44; that stretch reads GPSGCGKS.

Belongs to the ABC transporter superfamily.

This is an uncharacterized protein from Escherichia coli (strain K12).